The chain runs to 328 residues: Urokinase plasminogen activator surface receptor (328 aa).

Positions 1-24 (MGLLRRRLLLLVVVVTTCVPASQG) are cleaved as a signal peptide. UPAR/Ly6 domains lie at 25–118 (LRCI…GRYL), 118–213 (LECA…PPNG), and 214–299 (FQCY…RPTG). 3 disulfide bridges follow: Cys-27–Cys-48, Cys-30–Cys-36, and Cys-41–Cys-69. Residue Asn-76 is glycosylated (N-linked (GlcNAc...) asparagine). 11 disulfide bridges follow: Cys-95-Cys-100, Cys-120-Cys-147, Cys-123-Cys-130, Cys-140-Cys-169, Cys-175-Cys-192, Cys-193-Cys-198, Cys-216-Cys-244, Cys-219-Cys-227, Cys-237-Cys-263, Cys-269-Cys-288, and Cys-289-Cys-294. N-linked (GlcNAc...) asparagine glycosylation is found at Asn-184, Asn-194, Asn-222, Asn-255, Asn-283, and Asn-290. A lipid anchor (GPI-anchor amidated glycine) is attached at Gly-299. Positions 300–328 (GAPGPGPAHLILIASLLLTLRLWGIPLWT) are cleaved as a propeptide — removed in mature form.

As to quaternary structure, monomer. Interacts (via the UPAR/Ly6 domains) with SRPX2. Interacts with MRC2. Interacts with SORL1 (via N-terminal ectodomain); this interaction decreases PLAUR internalization. The ternary complex composed of PLAUR-PLAU-SERPINE1 also interacts with SORL1. Interacts with CD82; this interaction prevents PLAUR from binding to its high affinity ligand PLAU.

It localises to the cell membrane. Its subcellular location is the secreted. Its function is as follows. Acts as a receptor for urokinase plasminogen activator. Plays a role in localizing and promoting plasmin formation. Mediates the proteolysis-independent signal transduction activation effects of U-PA. This Rattus norvegicus (Rat) protein is Urokinase plasminogen activator surface receptor (Plaur).